Here is a 215-residue protein sequence, read N- to C-terminus: RNA pyrophosphohydrolase (215 aa).

One can recognise a Nudix hydrolase domain in the interval 6–149; sequence GFRPNVGIIL…KRDVYQLALT (144 aa). The Nudix box signature appears at 38 to 59; sequence GGIKYGETPMQAMYRELHEETG.

It belongs to the Nudix hydrolase family. RppH subfamily. Requires a divalent metal cation as cofactor.

Accelerates the degradation of transcripts by removing pyrophosphate from the 5'-end of triphosphorylated RNA, leading to a more labile monophosphorylated state that can stimulate subsequent ribonuclease cleavage. The protein is RNA pyrophosphohydrolase of Burkholderia lata (strain ATCC 17760 / DSM 23089 / LMG 22485 / NCIMB 9086 / R18194 / 383).